A 275-amino-acid chain; its full sequence is 3-deoxy-manno-octulosonate cytidylyltransferase (275 aa).

It belongs to the KdsB family.

Its subcellular location is the cytoplasm. The enzyme catalyses 3-deoxy-alpha-D-manno-oct-2-ulosonate + CTP = CMP-3-deoxy-beta-D-manno-octulosonate + diphosphate. It participates in nucleotide-sugar biosynthesis; CMP-3-deoxy-D-manno-octulosonate biosynthesis; CMP-3-deoxy-D-manno-octulosonate from 3-deoxy-D-manno-octulosonate and CTP: step 1/1. It functions in the pathway bacterial outer membrane biogenesis; lipopolysaccharide biosynthesis. Its function is as follows. Activates KDO (a required 8-carbon sugar) for incorporation into bacterial lipopolysaccharide in Gram-negative bacteria. The chain is 3-deoxy-manno-octulosonate cytidylyltransferase from Psychrobacter sp. (strain PRwf-1).